We begin with the raw amino-acid sequence, 476 residues long: Cytochrome c oxidase subunit 1 (476 aa).

Residues 19 to 39 (LYYLWFSFLFGIYGFLLSVIL) traverse the membrane as a helical segment. Glu-42 serves as a coordination point for Ca(2+). 8 consecutive transmembrane segments (helical) span residues 61-81 (MIFT…GLFG), 105-125 (ISLL…AAEF), 144-164 (LSPV…IASI), 194-214 (LIIT…GVLM), 240-260 (LLWF…FGII), 278-298 (MILA…HHMY), 309-329 (FFTS…FNWL), and 345-365 (LLSL…VILG). His-66 is a Fe(II)-heme a binding site. Residue His-246 coordinates Cu cation. Residues 246 to 250 (HPEVY) constitute a cross-link (1'-histidyl-3'-tyrosine (His-Tyr)). Tyr-250 contacts O2. His-295 and His-296 together coordinate Cu cation. The Mg(2+) site is built by His-374 and Asp-375. 2 consecutive transmembrane segments (helical) span residues 379 to 399 (VIAH…FTSV) and 415 to 435 (TIIV…FLPM). His-382 is a binding site for heme a3. Residue His-384 coordinates Fe(II)-heme a. Pro-448 is a binding site for Ca(2+). A helical membrane pass occupies residues 455 to 475 (NGWNMICSIGSTMTLFGLLIF).

The protein belongs to the heme-copper respiratory oxidase family. Component of the cytochrome c oxidase (complex IV, CIV), a multisubunit enzyme composed of a catalytic core of 3 subunits and several supernumerary subunits. The complex exists as a monomer or a dimer and forms supercomplexes (SCs) in the inner mitochondrial membrane with ubiquinol-cytochrome c oxidoreductase (cytochrome b-c1 complex, complex III, CIII). The cofactor is heme. Cu cation serves as cofactor.

Its subcellular location is the mitochondrion inner membrane. The enzyme catalyses 4 Fe(II)-[cytochrome c] + O2 + 8 H(+)(in) = 4 Fe(III)-[cytochrome c] + 2 H2O + 4 H(+)(out). Its pathway is energy metabolism; oxidative phosphorylation. In terms of biological role, component of the cytochrome c oxidase, the last enzyme in the mitochondrial electron transport chain which drives oxidative phosphorylation. The respiratory chain contains 3 multisubunit complexes succinate dehydrogenase (complex II, CII), ubiquinol-cytochrome c oxidoreductase (cytochrome b-c1 complex, complex III, CIII) and cytochrome c oxidase (complex IV, CIV), that cooperate to transfer electrons derived from NADH and succinate to molecular oxygen, creating an electrochemical gradient over the inner membrane that drives transmembrane transport and the ATP synthase. Cytochrome c oxidase is the component of the respiratory chain that catalyzes the reduction of oxygen to water. Electrons originating from reduced cytochrome c in the intermembrane space (IMS) are transferred via the dinuclear copper A center (CU(A)) of subunit 2 and heme A of subunit 1 to the active site in subunit 1, a binuclear center (BNC) formed by heme A3 and copper B (CU(B)). The BNC reduces molecular oxygen to 2 water molecules using 4 electrons from cytochrome c in the IMS and 4 protons from the mitochondrial matrix. The chain is Cytochrome c oxidase subunit 1 (COI) from Plasmodium chabaudi.